We begin with the raw amino-acid sequence, 237 residues long: Phosphoribosylaminoimidazole-succinocarboxamide synthase (237 aa).

It belongs to the SAICAR synthetase family.

The catalysed reaction is 5-amino-1-(5-phospho-D-ribosyl)imidazole-4-carboxylate + L-aspartate + ATP = (2S)-2-[5-amino-1-(5-phospho-beta-D-ribosyl)imidazole-4-carboxamido]succinate + ADP + phosphate + 2 H(+). It functions in the pathway purine metabolism; IMP biosynthesis via de novo pathway; 5-amino-1-(5-phospho-D-ribosyl)imidazole-4-carboxamide from 5-amino-1-(5-phospho-D-ribosyl)imidazole-4-carboxylate: step 1/2. In Sodalis glossinidius (strain morsitans), this protein is Phosphoribosylaminoimidazole-succinocarboxamide synthase.